The following is a 256-amino-acid chain: 5'-nucleotidase SurE (256 aa).

A divalent metal cation is bound by residues Asp8, Asp9, Ser40, and Asn92.

It belongs to the SurE nucleotidase family. Requires a divalent metal cation as cofactor.

It localises to the cytoplasm. It catalyses the reaction a ribonucleoside 5'-phosphate + H2O = a ribonucleoside + phosphate. In terms of biological role, nucleotidase that shows phosphatase activity on nucleoside 5'-monophosphates. This is 5'-nucleotidase SurE from Rhizobium meliloti (strain 1021) (Ensifer meliloti).